The primary structure comprises 158 residues: MRTGIGIDVHPFAEGRKLVIGGVEIPSAKGLDGHSDADVLLHAVSDALLGAAALGDIGLHFPNTSQEFKDIDSMILLKHVKKLLDKEGFRIVNIDAMLLLEAPKIASYINEMRKNIARCLGLELNAVSVKATTNEKLGYIGREEGAAAHAVCLIQVKP.

A divalent metal cation contacts are provided by D8 and H10. Residues 8–10 and 34–35 contribute to the 4-CDP-2-C-methyl-D-erythritol 2-phosphate site; these read DVH and HS. Position 42 (H42) interacts with a divalent metal cation. Residues 56–58, 132–135, and R142 contribute to the 4-CDP-2-C-methyl-D-erythritol 2-phosphate site; these read DIG and TTNE.

This sequence belongs to the IspF family. In terms of assembly, homotrimer. The cofactor is a divalent metal cation.

The catalysed reaction is 4-CDP-2-C-methyl-D-erythritol 2-phosphate = 2-C-methyl-D-erythritol 2,4-cyclic diphosphate + CMP. Its pathway is isoprenoid biosynthesis; isopentenyl diphosphate biosynthesis via DXP pathway; isopentenyl diphosphate from 1-deoxy-D-xylulose 5-phosphate: step 4/6. In terms of biological role, involved in the biosynthesis of isopentenyl diphosphate (IPP) and dimethylallyl diphosphate (DMAPP), two major building blocks of isoprenoid compounds. Catalyzes the conversion of 4-diphosphocytidyl-2-C-methyl-D-erythritol 2-phosphate (CDP-ME2P) to 2-C-methyl-D-erythritol 2,4-cyclodiphosphate (ME-CPP) with a corresponding release of cytidine 5-monophosphate (CMP). This Chlorobium phaeobacteroides (strain DSM 266 / SMG 266 / 2430) protein is 2-C-methyl-D-erythritol 2,4-cyclodiphosphate synthase.